A 227-amino-acid polypeptide reads, in one-letter code: UPF0173 metal-dependent hydrolase BCE_4747 (227 aa).

This sequence belongs to the UPF0173 family.

The chain is UPF0173 metal-dependent hydrolase BCE_4747 from Bacillus cereus (strain ATCC 10987 / NRS 248).